A 528-amino-acid chain; its full sequence is Butyrophilin subfamily 2 member A2 (528 aa).

The N-terminal stretch at 1–29 (MESAAALHFSRPASLLLLLLLSLCALVSA) is a signal peptide. The Extracellular segment spans residues 30–249 (QVTVVGPTDP…SFMPSVSPCA (220 aa)). Residues 31–142 (VTVVGPTDPI…SYDEAILHLI (112 aa)) enclose the Ig-like V-type domain. N-linked (GlcNAc...) asparagine glycosylation is found at asparagine 47, asparagine 115, and asparagine 121. The cysteines at positions 52 and 126 are disulfide-linked. Residues 150 to 232 (PLIEMRGHED…NNTLLSQKKE (83 aa)) form the Ig-like C2-type domain. A helical transmembrane segment spans residues 250–270 (VALPIVVVILMILFAVCMYWI). The stretch at 270–320 (INKLQKEKKILSGEKEFERETREIAVKELEKERVQKEEELQVKEKLQEELR) forms a coiled coil. Residues 271-528 (NKLQKEKKIL…LHRVGTHQSL (258 aa)) lie on the Cytoplasmic side of the membrane. A B30.2/SPRY domain is found at 311 to 507 (VKEKLQEELR…IFICPALTGA (197 aa)).

This sequence belongs to the immunoglobulin superfamily. BTN/MOG family. In terms of processing, N-glycosylated.

The protein resides in the membrane. Functionally, inhibits the proliferation of CD4 and CD8 T-cells activated by anti-CD3 antibodies, T-cell metabolism and IL2 and IFNG secretion. The chain is Butyrophilin subfamily 2 member A2 (BTN2A2) from Pongo abelii (Sumatran orangutan).